We begin with the raw amino-acid sequence, 322 residues long: Acetyl-coenzyme A carboxylase carboxyl transferase subunit beta (322 aa).

A CoA carboxyltransferase N-terminal domain is found at 24 to 293 (LWIKCPDTGQ…PAVEEPAVVD (270 aa)).

Belongs to the AccD/PCCB family. Acetyl-CoA carboxylase is a heterohexamer composed of biotin carboxyl carrier protein (AccB), biotin carboxylase (AccC) and two subunits each of ACCase subunit alpha (AccA) and ACCase subunit beta (AccD).

The protein localises to the cytoplasm. The catalysed reaction is N(6)-carboxybiotinyl-L-lysyl-[protein] + acetyl-CoA = N(6)-biotinyl-L-lysyl-[protein] + malonyl-CoA. It functions in the pathway lipid metabolism; malonyl-CoA biosynthesis; malonyl-CoA from acetyl-CoA: step 1/1. In terms of biological role, component of the acetyl coenzyme A carboxylase (ACC) complex. Biotin carboxylase (BC) catalyzes the carboxylation of biotin on its carrier protein (BCCP) and then the CO(2) group is transferred by the transcarboxylase to acetyl-CoA to form malonyl-CoA. The chain is Acetyl-coenzyme A carboxylase carboxyl transferase subunit beta from Rhodopseudomonas palustris (strain HaA2).